We begin with the raw amino-acid sequence, 453 residues long: Armadillo repeat-containing X-linked protein 1 (453 aa).

At 1–6 the chain is on the mitochondrial intermembrane side; sequence MGRTRE. 2 mitochondrion outer membrane (MOM)-targeting sequence regions span residues 1–6 and 26–36; these read MGRTRE and RLAWGRDENEK. The helical; Signal-anchor transmembrane segment at 7–29 threads the bilayer; sequence AGCVAAGVVIGAGACYCVYRLAW. The Cytoplasmic segment spans residues 30 to 453; the sequence is GRDENEKIWD…VKVLKVLTKL (424 aa). The tract at residues 140-182 is disordered; that stretch reads PSLPCPGGRGGGCHPTRSGSRAGGRASGKSKGKARSKSTRAPA. Over residues 167-177 the composition is skewed to basic residues; the sequence is GKSKGKARSKS. ARM repeat units lie at residues 195 to 235, 237 to 276, 358 to 398, and 415 to 453; these read PYKI…NNAA, SFNQ…NLSV, PAMT…NIND, and SSLF…LTKL.

This sequence belongs to the eutherian X-chromosome-specific Armcx family. Interacts with MIRO1.

It is found in the mitochondrion. It localises to the mitochondrion outer membrane. Its function is as follows. Regulates mitochondrial transport during axon regeneration. Increases the proportion of motile mitochondria by recruiting stationary mitochondria into the motile pool. Enhances mitochondria movement and neurite growth in both adult axons and embryonic neurons. Promotes neuronal survival and axon regeneration after nerve injury. May link mitochondria to the Trak1-kinesin motor complex via its interaction with MIRO1. This chain is Armadillo repeat-containing X-linked protein 1 (ARMCX1), found in Pongo abelii (Sumatran orangutan).